Here is a 459-residue protein sequence, read N- to C-terminus: Flavin-containing monooxygenase FMO GS-OX5 (459 aa).

An FAD-binding site is contributed by 17–22; that stretch reads GAGAAG. 212 to 217 contacts NADP(+); that stretch reads GNFASG.

It belongs to the FMO family.

It catalyses the reaction a (Z)-omega-(methylsulfanyl)-N-sulfo-alkylhydroximate S-glucoside + NADPH + O2 + H(+) = a (Z)-omega-(methylsulfinyl)-alkyl-glucosinolate + NADP(+) + H2O. Catalyzes the conversion of methylthioalkyl glucosinolates into methylsulfinylalkyl glucosinolates. Specific for 8-methylthiooctyl (8-MTO) glucosinolates. The polypeptide is Flavin-containing monooxygenase FMO GS-OX5 (FMOGS-OX5) (Arabidopsis thaliana (Mouse-ear cress)).